A 141-amino-acid chain; its full sequence is Cystatin (141 aa).

An N-terminal signal peptide occupies residues 1 to 26; the sequence is MVHSQLPVAAPLRLLCALLLLPSATM. A Cystatin domain is found at 29 to 129; that stretch reads GGISPRSVTD…CHFQVWSRPW (101 aa). Positions 73–77 match the Secondary area of contact motif; the sequence is QVVAG. Cystine bridges form between Cys91-Cys107 and Cys120-Cys140.

Belongs to the cystatin family. Expressed by the venom gland at an extremely low level (at protein level).

The protein resides in the secreted. Functionally, inhibits various C1 cysteine proteases including cathepsin L, papain and cathepsin B. This protein has no toxic activity and its function in the venom is unknown. It may play a role as a housekeeping or regulatory protein. The chain is Cystatin from Oxyuranus microlepidotus (Inland taipan).